The sequence spans 385 residues: Putative mitochondrial carrier protein TRV_02148.2 (385 aa).

2 Solcar repeats span residues 24 to 124 (SNTL…LHAR) and 130 to 210 (RTAG…LRRR). 5 helical membrane passes run 30 to 47 (GTAI…DSIL), 132 to 150 (AGNE…KLFT), 184 to 207 (WSAY…YLAL), 263 to 279 (YTIC…LEVI), and 294 to 310 (VVTV…LYML).

Belongs to the mitochondrial carrier (TC 2.A.29) family.

The protein resides in the mitochondrion inner membrane. May function as a mitochondrial transporter. The sequence is that of Putative mitochondrial carrier protein TRV_02148.2 from Trichophyton verrucosum (strain HKI 0517).